Reading from the N-terminus, the 361-residue chain is tRNA/tmRNA (uracil-C(5))-methyltransferase (361 aa).

Positions 185, 213, 218, 234, and 294 each coordinate S-adenosyl-L-methionine. C319 serves as the catalytic Nucleophile. E353 acts as the Proton acceptor in catalysis.

This sequence belongs to the class I-like SAM-binding methyltransferase superfamily. RNA M5U methyltransferase family. TrmA subfamily.

It carries out the reaction uridine(54) in tRNA + S-adenosyl-L-methionine = 5-methyluridine(54) in tRNA + S-adenosyl-L-homocysteine + H(+). It catalyses the reaction uridine(341) in tmRNA + S-adenosyl-L-methionine = 5-methyluridine(341) in tmRNA + S-adenosyl-L-homocysteine + H(+). In terms of biological role, dual-specificity methyltransferase that catalyzes the formation of 5-methyluridine at position 54 (m5U54) in all tRNAs, and that of position 341 (m5U341) in tmRNA (transfer-mRNA). The sequence is that of tRNA/tmRNA (uracil-C(5))-methyltransferase from Pseudomonas putida (strain ATCC 700007 / DSM 6899 / JCM 31910 / BCRC 17059 / LMG 24140 / F1).